We begin with the raw amino-acid sequence, 302 residues long: Lipoyl synthase (302 aa).

C54, C59, C65, C80, C84, C87, and S291 together coordinate [4Fe-4S] cluster. In terms of domain architecture, Radical SAM core spans 66-280; the sequence is WSRKTATYML…RIYGKSIGFK (215 aa).

Belongs to the radical SAM superfamily. Lipoyl synthase family. The cofactor is [4Fe-4S] cluster.

The protein resides in the cytoplasm. It catalyses the reaction [[Fe-S] cluster scaffold protein carrying a second [4Fe-4S](2+) cluster] + N(6)-octanoyl-L-lysyl-[protein] + 2 oxidized [2Fe-2S]-[ferredoxin] + 2 S-adenosyl-L-methionine + 4 H(+) = [[Fe-S] cluster scaffold protein] + N(6)-[(R)-dihydrolipoyl]-L-lysyl-[protein] + 4 Fe(3+) + 2 hydrogen sulfide + 2 5'-deoxyadenosine + 2 L-methionine + 2 reduced [2Fe-2S]-[ferredoxin]. Its pathway is protein modification; protein lipoylation via endogenous pathway; protein N(6)-(lipoyl)lysine from octanoyl-[acyl-carrier-protein]: step 2/2. Functionally, catalyzes the radical-mediated insertion of two sulfur atoms into the C-6 and C-8 positions of the octanoyl moiety bound to the lipoyl domains of lipoate-dependent enzymes, thereby converting the octanoylated domains into lipoylated derivatives. The sequence is that of Lipoyl synthase from Leptospira borgpetersenii serovar Hardjo-bovis (strain JB197).